The sequence spans 303 residues: ATP synthase gamma chain (303 aa).

It belongs to the ATPase gamma chain family. In terms of assembly, F-type ATPases have 2 components, CF(1) - the catalytic core - and CF(0) - the membrane proton channel. CF(1) has five subunits: alpha(3), beta(3), gamma(1), delta(1), epsilon(1). CF(0) has three main subunits: a, b and c.

Its subcellular location is the cell inner membrane. In terms of biological role, produces ATP from ADP in the presence of a proton gradient across the membrane. The gamma chain is believed to be important in regulating ATPase activity and the flow of protons through the CF(0) complex. This Elusimicrobium minutum (strain Pei191) protein is ATP synthase gamma chain.